The chain runs to 363 residues: Peptide chain release factor 1 (363 aa).

At Q237 the chain carries N5-methylglutamine. Basic and acidic residues predominate over residues 284–296; that stretch reads EDEKRRSAEESTR. The tract at residues 284-306 is disordered; the sequence is EDEKRRSAEESTRRSLVASGDRS.

Belongs to the prokaryotic/mitochondrial release factor family. Methylated by PrmC. Methylation increases the termination efficiency of RF1.

The protein resides in the cytoplasm. Its function is as follows. Peptide chain release factor 1 directs the termination of translation in response to the peptide chain termination codons UAG and UAA. The protein is Peptide chain release factor 1 of Shewanella putrefaciens (strain CN-32 / ATCC BAA-453).